A 348-amino-acid chain; its full sequence is Tetraacyldisaccharide 4'-kinase (348 aa).

ATP is bound at residue 54–61; the sequence is TVGGAGKT.

It belongs to the LpxK family.

The catalysed reaction is a lipid A disaccharide + ATP = a lipid IVA + ADP + H(+). It functions in the pathway glycolipid biosynthesis; lipid IV(A) biosynthesis; lipid IV(A) from (3R)-3-hydroxytetradecanoyl-[acyl-carrier-protein] and UDP-N-acetyl-alpha-D-glucosamine: step 6/6. In terms of biological role, transfers the gamma-phosphate of ATP to the 4'-position of a tetraacyldisaccharide 1-phosphate intermediate (termed DS-1-P) to form tetraacyldisaccharide 1,4'-bis-phosphate (lipid IVA). This is Tetraacyldisaccharide 4'-kinase from Agrobacterium fabrum (strain C58 / ATCC 33970) (Agrobacterium tumefaciens (strain C58)).